The chain runs to 82 residues: Small ribosomal subunit protein bS16 (82 aa).

Belongs to the bacterial ribosomal protein bS16 family.

The polypeptide is Small ribosomal subunit protein bS16 (Actinobacillus succinogenes (strain ATCC 55618 / DSM 22257 / CCUG 43843 / 130Z)).